We begin with the raw amino-acid sequence, 324 residues long: Aquaporin-4 (324 aa).

Over 1-36 (MSDRPAARPWGKCGSLCRREEIMVAFKGVWTQAFWK) the chain is Cytoplasmic. Residues cysteine 13 and cysteine 17 are each lipidated (S-palmitoyl cysteine). Residues 37–57 (AVTAEFLAMLIFVLLSLGSTI) traverse the membrane as a helical segment. At 58 to 69 (NWGGKENPLPVD) the chain is on the extracellular side. Residues 70–89 (MVLISLCFGLSIATMVQCFG) form a helical membrane-spanning segment. The Cytoplasmic portion of the chain corresponds to 90 to 93 (HISG). Residues 94 to 101 (GHINPAVT) constitute an intramembrane region (discontinuously helical). An NPA 1 motif is present at residues 97 to 99 (NPA). The Cytoplasmic portion of the chain corresponds to 102 to 115 (VAMVCTRKISIAKS). At serine 111 the chain carries Phosphoserine; by PKG. The chain crosses the membrane as a helical span at residues 116–136 (VFYIAAQCLGAIIGAGILYLV). Over 137–155 (TPPSVVGGLGVTTVHGNLT) the chain is Extracellular. N-linked (GlcNAc...) asparagine glycosylation is present at asparagine 153. A helical membrane pass occupies residues 156-176 (AGHGLLVELIITFQLVFTIFA). Over 177–184 (SCDSKRTD) the chain is Cytoplasmic. Residue serine 180 is modified to Phosphoserine; by PKC. The chain crosses the membrane as a helical span at residues 185–205 (VTGSIALAIGFSVAIGHLFAI). Residue asparagine 206 is glycosylated (N-linked (GlcNAc...) asparagine). The Extracellular portion of the chain corresponds to 206-208 (NYT). Positions 209–222 (GASMNPARSFGPAV) form an intramembrane region, discontinuously helical. Residues 213–215 (NPA) carry the NPA 2 motif. Residues 223–231 (IMGNWENHW) are Extracellular-facing. The helical transmembrane segment at 232-252 (IYWVGPIIGAVLAGGLYEYVF) threads the bilayer. Topologically, residues 253-324 (CPDVELKRRF…PSGEIAQTQH (72 aa)) are cytoplasmic. 2 positions are modified to phosphoserine: serine 276 and serine 285. The residue at position 289 (threonine 289) is a Phosphothreonine. Residues 305–316 (DRGDEKKGKDPS) are compositionally biased toward basic and acidic residues. The disordered stretch occupies residues 305–324 (DRGDEKKGKDPSGEIAQTQH).

It belongs to the MIP/aquaporin (TC 1.A.8) family. In terms of assembly, homotetramer. The tetramers can form oligomeric arrays in membranes. The size of the oligomers differs between tissues and is smaller in skeletal muscle than in brain. Interaction between AQP4 oligomeric arrays in close-by cells can contribute to cell-cell adhesion. Part of a complex containing MLC1, TRPV4, HEPACAM and ATP1B1. Post-translationally, phosphorylation by PKC at Ser-180 reduces conductance by 50%. Phosphorylation by PKG at Ser-111 in response to glutamate increases conductance by 40%. In terms of processing, isoform 2: Palmitoylated on its N-terminal region. Isoform 1: Not palmitoylated. Not expressed in kidney, Detectable in gastric parietal and brain astroglial cells. The absence of AQP4 in kidney may be critical for the extreme urinary concentration that occurs in this species (up to 5,000 mosmol/kg H(2)O).

It is found in the cell membrane. The protein resides in the basolateral cell membrane. Its subcellular location is the endosome membrane. It localises to the sarcolemma. The protein localises to the cell projection. The enzyme catalyses H2O(in) = H2O(out). Forms a water-specific channel. Plays an important role in brain water homeostasis and in glymphatic solute transport. Required for a normal rate of water exchange across the blood brain interface. Required for normal levels of cerebrospinal fluid influx into the brain cortex and parenchyma along paravascular spaces that surround penetrating arteries, and for normal drainage of interstitial fluid along paravenous drainage pathways. Thereby, it is required for normal clearance of solutes from the brain interstitial fluid, including soluble beta-amyloid peptides derived from APP. Plays a redundant role in urinary water homeostasis and urinary concentrating ability. This Dipodomys merriami (Merriam's kangaroo rat) protein is Aquaporin-4 (AQP4).